Here is a 370-residue protein sequence, read N- to C-terminus: MKSQSLIEDEIPVKENYAYQIPTSPLIVEVTPQERNILSNVGALLEKAFKSYENPDYIEALHLYSFQLLPERIARILSRFGTDFSADQYGAIIFRGLLEVDQDHLGPTPANWQSADYSKLNKYGFICSLLHGAVPSKPVQYYAQRKGGGILHAVIPDEKMAATQTGSGSKTNLYVHTEDAFLLHQADFLSFLYLRNEERVPSTLYSVRSHGKVNKIMEKLFDPIYQCPKDANYQEEINDGPLASVLYGNKKLPFIRFDAAEQIFNENAGQTPEALYNLTEFWNEAKELINSDYIPDSGDVIFVNNHLCAHGRSAFTAGQKEENGKLVPCERRQMLRMMSKTSLIHIRSMTHTDDPYFVMEEHLGKVFDQA.

3 residues coordinate Fe cation: H176, E178, and H310.

Belongs to the clavaminate synthase family. It depends on Fe(2+) as a cofactor.

The catalysed reaction is L-lysine + 2-oxoglutarate + O2 = (4R)-4-hydroxy-L-lysine + succinate + CO2. In terms of biological role, alpha-ketoglutarate-dependent dioxygenase that in vitro catalyzes the regio- and stereoselective hydroxylation of L-lysine, leading to (4R)-4-hydroxy-L-lysine. To a lesser extent, can also use (3S)-3-hydroxy-L-lysine as substrate, producing the dihydroxylated product (3R,4R)-3,4-hydroxy-L-lysine. Cannot use D-lysine or L-ornithine as substrate. This chain is L-lysine 4-hydroxylase, found in Flavobacterium johnsoniae (strain ATCC 17061 / DSM 2064 / JCM 8514 / BCRC 14874 / CCUG 350202 / NBRC 14942 / NCIMB 11054 / UW101) (Cytophaga johnsonae).